The following is a 229-amino-acid chain: ATP synthase subunit a (229 aa).

6 consecutive transmembrane segments (helical) span residues 25–45 (ADAI…SILA), 82–102 (FFPL…IGLI), 111–131 (NINT…IVGI), 142–162 (FLGP…IGHF), 181–201 (LVLM…MMLM), and 202–222 (GVLV…IYIQ).

Belongs to the ATPase A chain family. F-type ATPases have 2 components, CF(1) - the catalytic core - and CF(0) - the membrane proton channel. CF(1) has five subunits: alpha(3), beta(3), gamma(1), delta(1), epsilon(1). CF(0) has three main subunits: a(1), b(2) and c(9-12). The alpha and beta chains form an alternating ring which encloses part of the gamma chain. CF(1) is attached to CF(0) by a central stalk formed by the gamma and epsilon chains, while a peripheral stalk is formed by the delta and b chains.

It is found in the cell inner membrane. Functionally, key component of the proton channel; it plays a direct role in the translocation of protons across the membrane. This Geotalea daltonii (strain DSM 22248 / JCM 15807 / FRC-32) (Geobacter daltonii) protein is ATP synthase subunit a.